Reading from the N-terminus, the 495-residue chain is L-2,4-diaminobutyrate decarboxylase (495 aa).

Residue K312 is modified to N6-(pyridoxal phosphate)lysine.

It belongs to the group II decarboxylase family. Pyridoxal 5'-phosphate is required as a cofactor.

It carries out the reaction L-2,4-diaminobutanoate + H(+) = propane-1,3-diamine + CO2. It participates in siderophore biosynthesis; rhizobactin biosynthesis. The polypeptide is L-2,4-diaminobutyrate decarboxylase (rhbB) (Rhizobium meliloti (strain 1021) (Ensifer meliloti)).